Here is a 2119-residue protein sequence, read N- to C-terminus: Outer kinetochore KNL1 complex subunit KNL1 (2119 aa).

The interval 1–59 (MDGVYSEANEENDNTQRPVRRQHSSILKPPRSPLQDLKCGNQTNQEPNPPRKRKSSRRV) is disordered. The tract at residues 1-202 (MDGVYSEANE…SDNFIKRLKT (202 aa)) is may mediate oligomerization. 2 interaction with microtubules regions span residues 17–34 (RPVR…RSPL) and 53–80 (RKSS…ERNS). Positions 23 to 80 (HSSILKPPRSPLQDLKCGNQTNQEPNPPRKRKSSRRVSFADTIKVFQTESHMKTERNS) are interaction with PP1CA; contains the protein phosphatase 1 (PP1) interaction motifs SILK, RVXF and phi-phi. 3 positions are modified to phosphoserine: S24, S32, and S60. The tract at residues 124–140 (ENQMDLTASHTVMITKG) is interaction with BUB1. The interaction with BUB1B stretch occupies residues 160 to 179 (ENLKHHAANSRIKKDLACST). S538 bears the Phosphoserine mark. 2 positions are modified to phosphothreonine: T540 and T739. The stretch at 723–827 (DKTILFSEGN…MTKSHTVFID (105 aa)) is repeat 1. The interval 723-1027 (DKTILFSEGN…VTRSHTVFID (305 aa)) is 2 X 104 AA approximate repeats. Residues S794 and S878 each carry the phosphoserine modification. Repeat unit 2 spans residues 923–1027 (KSITFPENDK…VTRSHTVFID (105 aa)). Residues S1243 and S1464 each carry the phosphoserine modification. Residues 1557 to 1583 (SQRESLPSENKTENCRAQKRTRVEEND) form a disordered region. Residues 1566 to 1583 (NKTENCRAQKRTRVEEND) are compositionally biased toward basic and acidic residues. A Nuclear localization signal motif is present at residues 1577 to 1590 (TRVEENDVTNEKKI). A phosphoserine mark is found at S1616, S1627, and S1642. The required for interaction with ZWINT stretch occupies residues 1763–1890 (KVKDYSDEEL…FLEVETQKTQ (128 aa)). Positions 1799–1890 (VALYNKLVHS…FLEVETQKTQ (92 aa)) form a coiled coil. The tract at residues 1873 to 2093 (EEEELQRKFL…GKTGHDEIAA (221 aa)) is interaction with NSL1, DSN1 and required for assembly into the outer kinetochore.

Component of the KNL1 complex composed of KNL1 and ZWINT. Part of the ten-subunit outer kinetochore KMN network that includes the KNL1, MIS12 and NDC80 complexes; a bioriented kinetochore contains approximately 150 copies of the network. Interacts (via C-terminus) with the MIS12 complex subunits NSL1 (via C-terminus), PMF1 and DSN1; the interaction is direct. Interacts (via N-terminal region) with BUB1B (via BUB1 N-terminal domain); the interaction is direct and is required for cell cycle arrest upon activation of the mitotic spindle assembly checkpoint. Interacts (via N-terminal region) with BUB1 (via BUB1 N-terminal domain); the interaction is direct. Interacts with the protein phosphatase PP1 subunit PPP1CA; the interaction is direct and mutually exclusive with binding to microtubules. Interacts with the protein phosphatase PP1 subunit PPP1CC; the interaction is direct and mutually exclusive with binding to microtubules. Post-translationally, phosphorylation by AURKB negatively regulates its interaction with protein phosphatase 1 (PP1) subunit PPP1CA and with microtubules. As to expression, expressed in oocytes during meiotic progression (at protein level). Expressed during spermatogenesis.

The protein localises to the nucleus. It localises to the chromosome. The protein resides in the centromere. It is found in the kinetochore. Its subcellular location is the cytoplasm. In terms of biological role, acts as a component of the outer kinetochore KNL1 complex that serves as a docking point for spindle assembly checkpoint components and mediates microtubule-kinetochore interactions. Kinetochores, consisting of a centromere-associated inner segment and a microtubule-contacting outer segment, play a crucial role in chromosome segregation by mediating the physical connection between centromeric DNA and spindle microtubules. The outer kinetochore is made up of the ten-subunit KMN network, comprising the MIS12, NDC80 and KNL1 complexes, and auxiliary microtubule-associated components; together they connect the outer kinetochore with the inner kinetochore, bind microtubules, and mediate interactions with mitotic checkpoint proteins that delay anaphase until chromosomes are bioriented on the spindle. Required for kinetochore binding by a distinct subset of kMAPs (kinetochore-bound microtubule-associated proteins) and motors. Acts in coordination with CENPK to recruit the NDC80 complex to the outer kinetochore. Can bind either to microtubules or to the protein phosphatase 1 (PP1) catalytic subunits PPP1CA and PPP1CC (via overlapping binding sites), it has higher affinity for PP1. Recruits MAD2L1 to the kinetochore and also directly links BUB1 and BUB1B to the kinetochore. In addition to orienting mitotic chromosomes, it is also essential for alignment of homologous chromosomes during meiotic metaphase I. In meiosis I, required to activate the spindle assembly checkpoint at unattached kinetochores to correct erroneous kinetochore-microtubule attachments. This chain is Outer kinetochore KNL1 complex subunit KNL1, found in Mus musculus (Mouse).